The primary structure comprises 257 residues: Dof zinc finger protein DOF5.3 (257 aa).

The interval 23–50 (LSYSSNPTPLDNDQKKPSPATAVTRPQP) is disordered. Residues 24–33 (SYSSNPTPLD) show a composition bias toward polar residues. Residues 55–109 (LRCPRCDSTNTKFCYYNNYSLTQPRYFCKSCRRYWTKGGTLRNIPVGGGCRKNKR) form a Dof-type zinc finger. Zn(2+) contacts are provided by Cys-57, Cys-60, Cys-82, and Cys-85. Residues 104–127 (CRKNKRSTSSAARSLRTTPEPASH) form a disordered region. Low complexity predominate over residues 110 to 121 (STSSAARSLRTT).

In terms of tissue distribution, the PEAR proteins (e.g. DOF2.4, DOF5.1, DOF3.2, DOF1.1, DOF5.6 and DOF5.3) form a short-range concentration gradient that peaks at protophloem sieve elements (PSE). Accumulates in the stele.

The protein resides in the nucleus. Transcription factor that binds specifically to a 5'-AA[AG]G-3' consensus core sequence. The PEAR proteins (e.g. DOF2.4, DOF5.1, DOF3.2, DOF1.1, DOF5.6 and DOF5.3) activate gene expression that promotes radial growth of protophloem sieve elements. The protein is Dof zinc finger protein DOF5.3 of Arabidopsis thaliana (Mouse-ear cress).